A 556-amino-acid chain; its full sequence is MIITTKALTVLPHSGLRTTHRSLLARLRHYFKNMLCPDLHPPATVRGMKLLDRSAFSKTIKVPHLLVPKDKNLNDICRASKKYLLKMERYKPVITEQYKITLHPLAVQKWEDLADLNLEKLDIGSEALVWEEIQLKYENWKYDEIFKAVLPADKEALSSFSKIGHIIHLNLKDHLLPYKELIGQVICDKIADCRTVVNKSLSIDNTYRNFQMELLCGEPDYRVSVKENACLFEFDFSKVYWNPRLSTEHEKIVKMLAKTDTLFDLYAGVGPFTVPAARRGCKVLANDLNPDSYEALVNNCALNKVSKHVTCHNKDAVDFIKHEVKQALLEKCTDESMEGDIHITMNLPAMAVEHLVHFPGLLKDEDVVLRKQPLVHVYCFAKGVEDKKQIARELVEHWLGTDVTDKLKEIAFVRNVAPNKDMMRVSFYLTEDLLLGRTAVKKRQHEEEDLPQLEEAKRPSNKMKDQRKQLAKKAKTVFSVSQVKKGNLKKTKEVSSNLKKIQVNDKREKVDKKFENLHAQIVSKKAAKPAPKPLPAKNKSKPDTKKIEADLNEMQM.

The transit peptide at 1–30 directs the protein to the mitochondrion; the sequence is MIITTKALTVLPHSGLRTTHRSLLARLRHY. Residues His249, 287 to 288, 315 to 316, and Asn346 each bind S-adenosyl-L-methionine; these read DL and DA. Disordered regions lie at residues 444–465 and 524–556; these read QHEEEDLPQLEEAKRPSNKMKD and KKAAKPAPKPLPAKNKSKPDTKKIEADLNEMQM. Composition is skewed to basic and acidic residues over residues 454-465 and 540-549; these read EEAKRPSNKMKD and SKPDTKKIEA.

This sequence belongs to the class I-like SAM-binding methyltransferase superfamily. TRM5/TYW2 family. As to quaternary structure, monomer.

The protein localises to the mitochondrion matrix. Its subcellular location is the nucleus. It localises to the cytoplasm. The enzyme catalyses guanosine(37) in tRNA + S-adenosyl-L-methionine = N(1)-methylguanosine(37) in tRNA + S-adenosyl-L-homocysteine + H(+). Its function is as follows. Specifically methylates the N1 position of guanosine-37 in various cytoplasmic and mitochondrial tRNAs. Methylation is not dependent on the nature of the nucleoside 5' of the target nucleoside. This is the first step in the biosynthesis of wybutosine (yW), a modified base adjacent to the anticodon of tRNAs and required for accurate decoding. This Anopheles gambiae (African malaria mosquito) protein is tRNA (guanine(37)-N(1))-methyltransferase.